The sequence spans 251 residues: Imidazole glycerol phosphate synthase subunit HisF (251 aa).

Residues aspartate 11 and aspartate 130 contribute to the active site.

This sequence belongs to the HisA/HisF family. In terms of assembly, heterodimer of HisH and HisF.

Its subcellular location is the cytoplasm. The enzyme catalyses 5-[(5-phospho-1-deoxy-D-ribulos-1-ylimino)methylamino]-1-(5-phospho-beta-D-ribosyl)imidazole-4-carboxamide + L-glutamine = D-erythro-1-(imidazol-4-yl)glycerol 3-phosphate + 5-amino-1-(5-phospho-beta-D-ribosyl)imidazole-4-carboxamide + L-glutamate + H(+). It participates in amino-acid biosynthesis; L-histidine biosynthesis; L-histidine from 5-phospho-alpha-D-ribose 1-diphosphate: step 5/9. In terms of biological role, IGPS catalyzes the conversion of PRFAR and glutamine to IGP, AICAR and glutamate. The HisF subunit catalyzes the cyclization activity that produces IGP and AICAR from PRFAR using the ammonia provided by the HisH subunit. The chain is Imidazole glycerol phosphate synthase subunit HisF from Chlorobium phaeobacteroides (strain BS1).